Reading from the N-terminus, the 316-residue chain is 4-hydroxy-3-methylbut-2-enyl diphosphate reductase (316 aa).

Cysteine 12 is a [4Fe-4S] cluster binding site. Residues histidine 41 and histidine 74 each coordinate (2E)-4-hydroxy-3-methylbut-2-enyl diphosphate. Residues histidine 41 and histidine 74 each coordinate dimethylallyl diphosphate. 2 residues coordinate isopentenyl diphosphate: histidine 41 and histidine 74. Cysteine 96 lines the [4Fe-4S] cluster pocket. Histidine 124 is a (2E)-4-hydroxy-3-methylbut-2-enyl diphosphate binding site. Histidine 124 provides a ligand contact to dimethylallyl diphosphate. Histidine 124 lines the isopentenyl diphosphate pocket. Catalysis depends on glutamate 126, which acts as the Proton donor. (2E)-4-hydroxy-3-methylbut-2-enyl diphosphate is bound at residue threonine 167. Cysteine 197 lines the [4Fe-4S] cluster pocket. (2E)-4-hydroxy-3-methylbut-2-enyl diphosphate is bound by residues serine 225, serine 226, asparagine 227, and serine 269. The dimethylallyl diphosphate site is built by serine 225, serine 226, asparagine 227, and serine 269. Isopentenyl diphosphate is bound by residues serine 225, serine 226, asparagine 227, and serine 269.

It belongs to the IspH family. Homodimer. [4Fe-4S] cluster is required as a cofactor.

The enzyme catalyses isopentenyl diphosphate + 2 oxidized [2Fe-2S]-[ferredoxin] + H2O = (2E)-4-hydroxy-3-methylbut-2-enyl diphosphate + 2 reduced [2Fe-2S]-[ferredoxin] + 2 H(+). The catalysed reaction is dimethylallyl diphosphate + 2 oxidized [2Fe-2S]-[ferredoxin] + H2O = (2E)-4-hydroxy-3-methylbut-2-enyl diphosphate + 2 reduced [2Fe-2S]-[ferredoxin] + 2 H(+). The protein operates within isoprenoid biosynthesis; dimethylallyl diphosphate biosynthesis; dimethylallyl diphosphate from (2E)-4-hydroxy-3-methylbutenyl diphosphate: step 1/1. It functions in the pathway isoprenoid biosynthesis; isopentenyl diphosphate biosynthesis via DXP pathway; isopentenyl diphosphate from 1-deoxy-D-xylulose 5-phosphate: step 6/6. Functionally, catalyzes the conversion of 1-hydroxy-2-methyl-2-(E)-butenyl 4-diphosphate (HMBPP) into a mixture of isopentenyl diphosphate (IPP) and dimethylallyl diphosphate (DMAPP). Acts in the terminal step of the DOXP/MEP pathway for isoprenoid precursor biosynthesis. The sequence is that of 4-hydroxy-3-methylbut-2-enyl diphosphate reductase from Salmonella schwarzengrund (strain CVM19633).